We begin with the raw amino-acid sequence, 342 residues long: tRNA-specific 2-thiouridylase MnmA (342 aa).

Residues L6–S13 and L32 each bind ATP. The Nucleophile role is filled by C92. Cysteines 92 and 191 form a disulfide. G116 provides a ligand contact to ATP. The interaction with tRNA stretch occupies residues K138–Q140. The active-site Cysteine persulfide intermediate is C191. Positions R293–Y294 are interaction with tRNA.

It belongs to the MnmA/TRMU family.

It localises to the cytoplasm. It carries out the reaction S-sulfanyl-L-cysteinyl-[protein] + uridine(34) in tRNA + AH2 + ATP = 2-thiouridine(34) in tRNA + L-cysteinyl-[protein] + A + AMP + diphosphate + H(+). In terms of biological role, catalyzes the 2-thiolation of uridine at the wobble position (U34) of tRNA, leading to the formation of s(2)U34. This Helicobacter acinonychis (strain Sheeba) protein is tRNA-specific 2-thiouridylase MnmA.